A 130-amino-acid chain; its full sequence is Small ribosomal subunit protein uS8 (130 aa).

It belongs to the universal ribosomal protein uS8 family. As to quaternary structure, part of the 30S ribosomal subunit. Contacts proteins S5 and S12.

Functionally, one of the primary rRNA binding proteins, it binds directly to 16S rRNA central domain where it helps coordinate assembly of the platform of the 30S subunit. This is Small ribosomal subunit protein uS8 from Idiomarina loihiensis (strain ATCC BAA-735 / DSM 15497 / L2-TR).